A 233-amino-acid polypeptide reads, in one-letter code: Small ribosomal subunit protein uS3 (233 aa).

One can recognise a KH type-2 domain in the interval 39–107 (VRKYLTKELE…PAQINIAEVR (69 aa)). The segment at 214 to 233 (VEQPEKPSAQPKKQQRKGRK) is disordered.

Belongs to the universal ribosomal protein uS3 family. Part of the 30S ribosomal subunit. Forms a tight complex with proteins S10 and S14.

Its function is as follows. Binds the lower part of the 30S subunit head. Binds mRNA in the 70S ribosome, positioning it for translation. In Pectobacterium atrosepticum (strain SCRI 1043 / ATCC BAA-672) (Erwinia carotovora subsp. atroseptica), this protein is Small ribosomal subunit protein uS3.